Consider the following 594-residue polypeptide: MTAIPDWKLQLLARRRQEEAAVRGREKAERDRLSQMPAWKRGILERRRAKLGLPPGEGSPVPGNAEAGPPDPDESAVLLEAIGPVHQNRFIQQERQRQQQQQQQQRNEVLGDRKAGPLEVLERRSSPGNLRDQSPKGRESREERLSPRESRDRRLVIGGAQESSSRSLRDWRQSPAEARDLSSRPAEAQKWRLSPGETPEESLRLAGSGDDSPKRKEVLESILSPGEPGDQKASPTDVHKWNLDSREPQKQSLIQLEATEWRLKSGEERKDYLEGCGREEEKLSSGIVPVTKEVQDITSSEVETAEQRPTESWKWTLNSGKARERTTWDIDTQTQKPDPPASSEKHPGPSGMEAEEEAEKEEAEAQSRPLRAQQNLCSGPSPLPPEHSGTEGSRQQEEEAAEPRPPTPAPLSPPPSAPTAPQPSGDPLMSRLFYGVKPGPGVGAPRRSGHTFTVNPRRCAPPASPAPPVNPATADAAGSGSGKKRYPTAEEILVLGGYLRLSRSCLVKGSPERHHKQLKISFSETALETTYQYPSESSVLEDLGPEPETPIAPLATQPDEEEEEEEEEEELLLQPGLQGGLRTKALIVDESCRR.

Composition is skewed to basic and acidic residues over residues 18–33 (EEAA…RDRL) and 109–125 (VLGD…ERRS). Disordered stretches follow at residues 18–238 (EEAA…PTDV) and 294–485 (VQDI…GKKR). 4 positions are modified to phosphoserine: Ser126, Ser134, Ser174, and Ser194. Basic and acidic residues-rich tracts occupy residues 133-155 (QSPK…DRRL) and 167-190 (SLRD…EAQK). Position 198 is a phosphothreonine (Thr198). The residue at position 224 (Ser224) is a Phosphoserine. Acidic residues predominate over residues 353–364 (EAEEEAEKEEAE). A compositionally biased stretch (pro residues) spans 403-421 (PRPPTPAPLSPPPSAPTAP). Residue Ser412 is modified to Phosphoserine. At Lys437 the chain carries N6-acetyllysine. Ser510 carries the phosphoserine modification. The tract at residues 531–577 (YQYPSESSVLEDLGPEPETPIAPLATQPDEEEEEEEEEEELLLQPGL) is disordered. Positions 558 to 571 (PDEEEEEEEEEEEL) are enriched in acidic residues.

In terms of assembly, interacts with Protein phosphatase 1 (PP1).

It localises to the cytoplasm. It is found in the cytoskeleton. Its function is as follows. May target protein phosphatase 1 to F-actin cytoskeleton. This Mus musculus (Mouse) protein is Phostensin (Ppp1r18).